The primary structure comprises 89 residues: MTISKERKEEVISEHGAAAGDTGSPEVQIAILTERINGLTEHMRTHRKDYASRRGLLGLVSRRRRLLDYVRGQDPQRYLDIIGKLGIRK.

Residues 1–13 show a composition bias toward basic and acidic residues; that stretch reads MTISKERKEEVIS. Residues 1 to 24 are disordered; the sequence is MTISKERKEEVISEHGAAAGDTGS.

This sequence belongs to the universal ribosomal protein uS15 family. As to quaternary structure, part of the 30S ribosomal subunit. Forms a bridge to the 50S subunit in the 70S ribosome, contacting the 23S rRNA.

One of the primary rRNA binding proteins, it binds directly to 16S rRNA where it helps nucleate assembly of the platform of the 30S subunit by binding and bridging several RNA helices of the 16S rRNA. Functionally, forms an intersubunit bridge (bridge B4) with the 23S rRNA of the 50S subunit in the ribosome. The polypeptide is Small ribosomal subunit protein uS15 (Rhodopirellula baltica (strain DSM 10527 / NCIMB 13988 / SH1)).